A 165-amino-acid polypeptide reads, in one-letter code: MVVAVYPGTFDPLTRGHEDLVRRASSIFDTLVVGVADSRAKKPFFSLEERLTIANEVLGHYPNVKVMSFTGLLKDFVRTNNARVIVRGLRAVSDFEYEFQMAGMNRYLLPDVETMFMTPSDQYQFISGTIVREIAQLGGDVSKFVFPSVEKWLTEKVAAMGGPVA.

Thr-9 contacts substrate. ATP is bound by residues Thr-9–Phe-10 and His-17. The substrate site is built by Lys-41, Leu-73, and Arg-87. ATP contacts are provided by residues Gly-88–Arg-90, Glu-98, and Tyr-123–Thr-129.

This sequence belongs to the bacterial CoaD family. As to quaternary structure, homohexamer. Mg(2+) is required as a cofactor.

It localises to the cytoplasm. The enzyme catalyses (R)-4'-phosphopantetheine + ATP + H(+) = 3'-dephospho-CoA + diphosphate. Its pathway is cofactor biosynthesis; coenzyme A biosynthesis; CoA from (R)-pantothenate: step 4/5. Reversibly transfers an adenylyl group from ATP to 4'-phosphopantetheine, yielding dephospho-CoA (dPCoA) and pyrophosphate. In Burkholderia lata (strain ATCC 17760 / DSM 23089 / LMG 22485 / NCIMB 9086 / R18194 / 383), this protein is Phosphopantetheine adenylyltransferase.